We begin with the raw amino-acid sequence, 127 residues long: Histone H2B type 1-A (127 aa).

Residues Met-1–Lys-32 form a disordered region. Position 2 is an N-acetylproline (Pro-2). Lys-7, Lys-13, Lys-14, Lys-17, Lys-18, Lys-22, and Lys-25 each carry N6-acetyllysine; alternate. Lys-7, Lys-13, Lys-14, Lys-17, Lys-18, Lys-22, Lys-25, and Lys-36 each carry N6-crotonyllysine; alternate. Lys-7 and Lys-13 each carry N6-lactoyllysine; alternate. A Glycyl lysine isopeptide (Lys-Gly) (interchain with G-Cter in SUMO2); alternate cross-link involves residue Lys-7. 4 positions are modified to N6-lactoyllysine; alternate: Lys-17, Lys-18, Lys-22, and Lys-25. A Glycyl lysine isopeptide (Lys-Gly) (interchain with G-Cter in SUMO2); alternate cross-link involves residue Lys-22. Lys-36 is subject to N6-succinyllysine; alternate. Residue Lys-36 forms a Glycyl lysine isopeptide (Lys-Gly) (interchain with G-Cter in ubiquitin); alternate linkage. Position 38 is a phosphoserine (Ser-38). N6-lactoyllysine; alternate is present on Lys-45. Lys-48 carries the N6-methyllysine modification. N6,N6-dimethyllysine is present on Lys-59. A Dimethylated arginine modification is found at Arg-81. Lys-87 carries the N6-acetyllysine; alternate modification. Lys-87 bears the N6-lactoyllysine; alternate mark. N6,N6,N6-trimethyllysine; alternate is present on Lys-87. Omega-N-methylarginine occurs at positions 88 and 94. An N6-lactoyllysine; alternate modification is found at Lys-110. Lys-110 carries the N6-methyllysine modification. Residue Thr-117 is modified to Phosphothreonine. An N6-lactoyllysine; alternate mark is found at Lys-118 and Lys-122. Residues Lys-118 and Lys-122 each carry the N6-succinyllysine; alternate modification. Lys-118 carries the post-translational modification N6-methylated lysine; alternate. Lys-122 participates in a covalent cross-link: Glycyl lysine isopeptide (Lys-Gly) (interchain with G-Cter in ubiquitin); alternate.

Belongs to the histone H2B family. In terms of assembly, the nucleosome is a histone octamer containing two molecules each of H2A, H2B, H3 and H4 assembled in one H3-H4 heterotetramer and two H2A-H2B heterodimers. Post-translationally, monoubiquitination at Lys-36 by the MSL1/MSL2 dimer is required for histone H3 'Lys-4' (H3K4me) and 'Lys-79' (H3K79me) methylation and transcription activation at specific gene loci, such as HOXA9 and MEIS1 loci. Similarly, monoubiquitination of Lys-122 (H2BK120Ub) by the RNF20/40 complex gives a specific tag for epigenetic transcriptional activation and is also prerequisite for histone H3 'Lys-4' and 'Lys-79' methylation. It also functions cooperatively with the FACT dimer to stimulate elongation by RNA polymerase II. H2BK120Ub also acts as a regulator of mRNA splicing: deubiquitination by USP49 is required for efficient cotranscriptional splicing of a large set of exons. In terms of processing, crotonylation (Kcr) is specifically present in male germ cells and marks testis-specific genes in post-meiotic cells, including X-linked genes that escape sex chromosome inactivation in haploid cells. Crotonylation marks active promoters and enhancers and confers resistance to transcriptional repressors. It is also associated with post-meiotically activated genes on autosomes. Acetylated during spermatogenesis. Acetylated form is most abundant in spermatogonia compared to spermatocytes and round spermatids. Post-translationally, phosphorylated at Thr-117 in spermatogonia, spermatocytes and round spermatids. In terms of processing, methylated at Lys-118 in spermatogonia, spermatocytes and round spermatids. Lactylated in macrophages by EP300/P300 by using lactoyl-CoA directly derived from endogenous or exogenous lactate, leading to stimulates gene transcription. Testis. Expressed in pachytene spermatocytes during meiotic prophase I in the absence of any significant DNA synthesis.

It localises to the nucleus. It is found in the chromosome. Variant histone specifically required to direct the transformation of dissociating nucleosomes to protamine in male germ cells. Entirely replaces classical histone H2B prior nucleosome to protamine transition and probably acts as a nucleosome dissociating factor that creates a more dynamic chromatin, facilitating the large-scale exchange of histones. Core component of nucleosome. Nucleosomes wrap and compact DNA into chromatin, limiting DNA accessibility to the cellular machineries which require DNA as a template. Histones thereby play a central role in transcription regulation, DNA repair, DNA replication and chromosomal stability. DNA accessibility is regulated via a complex set of post-translational modifications of histones, also called histone code, and nucleosome remodeling. The chain is Histone H2B type 1-A from Rattus norvegicus (Rat).